A 360-amino-acid polypeptide reads, in one-letter code: Phospho-N-acetylmuramoyl-pentapeptide-transferase (360 aa).

Transmembrane regions (helical) follow at residues 26 to 46 (AIVS…RMIA), 72 to 92 (PTMG…LWAY), 94 to 114 (SNPY…IGFV), 132 to 152 (WKYF…YLAG), 168 to 188 (VMPQ…VGTG), 199 to 219 (GLAI…AWAT), 236 to 256 (AGEL…FLWF), 263 to 283 (VFMG…IAVL), 288 to 308 (FLLV…ILQV), and 338 to 358 (VIVR…ATLK).

It belongs to the glycosyltransferase 4 family. MraY subfamily. Mg(2+) is required as a cofactor.

It is found in the cell inner membrane. It carries out the reaction UDP-N-acetyl-alpha-D-muramoyl-L-alanyl-gamma-D-glutamyl-meso-2,6-diaminopimeloyl-D-alanyl-D-alanine + di-trans,octa-cis-undecaprenyl phosphate = di-trans,octa-cis-undecaprenyl diphospho-N-acetyl-alpha-D-muramoyl-L-alanyl-D-glutamyl-meso-2,6-diaminopimeloyl-D-alanyl-D-alanine + UMP. Its pathway is cell wall biogenesis; peptidoglycan biosynthesis. Its function is as follows. Catalyzes the initial step of the lipid cycle reactions in the biosynthesis of the cell wall peptidoglycan: transfers peptidoglycan precursor phospho-MurNAc-pentapeptide from UDP-MurNAc-pentapeptide onto the lipid carrier undecaprenyl phosphate, yielding undecaprenyl-pyrophosphoryl-MurNAc-pentapeptide, known as lipid I. The polypeptide is Phospho-N-acetylmuramoyl-pentapeptide-transferase (Enterobacter sp. (strain 638)).